The following is a 179-amino-acid chain: Orotate phosphoribosyltransferase (179 aa).

5-phospho-alpha-D-ribose 1-diphosphate contacts are provided by residues Arg24, Arg89, Lys90, Lys93, and Glu115–Ala123. 2 residues coordinate orotate: Thr119 and Arg147.

This sequence belongs to the purine/pyrimidine phosphoribosyltransferase family. PyrE subfamily. Homodimer. It depends on Mg(2+) as a cofactor.

The enzyme catalyses orotidine 5'-phosphate + diphosphate = orotate + 5-phospho-alpha-D-ribose 1-diphosphate. The protein operates within pyrimidine metabolism; UMP biosynthesis via de novo pathway; UMP from orotate: step 1/2. Functionally, catalyzes the transfer of a ribosyl phosphate group from 5-phosphoribose 1-diphosphate to orotate, leading to the formation of orotidine monophosphate (OMP). This chain is Orotate phosphoribosyltransferase, found in Nocardioides sp. (strain ATCC BAA-499 / JS614).